A 224-amino-acid polypeptide reads, in one-letter code: ATP-dependent dethiobiotin synthetase BioD (224 aa).

12–17 (EVGKTV) is an ATP binding site. Residue Thr16 coordinates Mg(2+). Lys34 is an active-site residue. Thr38 contacts substrate. Residues Asp47, 106–109 (EGAG), 166–167 (GS), and 196–198 (PEG) each bind ATP. Mg(2+)-binding residues include Asp47 and Glu106.

This sequence belongs to the dethiobiotin synthetase family. As to quaternary structure, homodimer. Mg(2+) serves as cofactor.

It is found in the cytoplasm. It carries out the reaction (7R,8S)-7,8-diammoniononanoate + CO2 + ATP = (4R,5S)-dethiobiotin + ADP + phosphate + 3 H(+). It functions in the pathway cofactor biosynthesis; biotin biosynthesis; biotin from 7,8-diaminononanoate: step 1/2. In terms of biological role, catalyzes a mechanistically unusual reaction, the ATP-dependent insertion of CO2 between the N7 and N8 nitrogen atoms of 7,8-diaminopelargonic acid (DAPA, also called 7,8-diammoniononanoate) to form a ureido ring. This chain is ATP-dependent dethiobiotin synthetase BioD, found in Saccharopolyspora erythraea (strain ATCC 11635 / DSM 40517 / JCM 4748 / NBRC 13426 / NCIMB 8594 / NRRL 2338).